A 344-amino-acid chain; its full sequence is Ureide permease 3 (344 aa).

The Extracellular segment spans residues Met1–Thr10. A helical transmembrane segment spans residues Ile11–Thr31. At Glu32–Tyr42 the chain is on the cytoplasmic side. A helical membrane pass occupies residues Leu43–Ile63. Over Ser64–Asn78 the chain is Extracellular. Residues Trp79 to Thr99 form a helical membrane-spanning segment. The Cytoplasmic segment spans residues Gln100–Tyr101. The chain crosses the membrane as a helical span at residues Ala102–Ile122. Residues Gly123–Arg136 lie on the Extracellular side of the membrane. Residues Ala137–Val157 form a helical membrane-spanning segment. Topologically, residues His158–Arg208 are cytoplasmic. Ala209–Ser216 lines the ATP pocket. The chain crosses the membrane as a helical span at residues Ala209–Pro229. The Extracellular portion of the chain corresponds to Lys230–Thr235. A helical membrane pass occupies residues Ala236–Leu256. At Tyr257–Arg278 the chain is on the cytoplasmic side. Residues Gly279–Gly299 traverse the membrane as a helical segment. At Gln300–Ser344 the chain is on the extracellular side.

This sequence belongs to the plant ureide permease (TC 2.A.7.19) family.

It is found in the membrane. In terms of biological role, proton-coupled transporter that transports a wide spectrum of oxo derivatives of heterocyclic nitrogen compounds. The polypeptide is Ureide permease 3 (Arabidopsis thaliana (Mouse-ear cress)).